Reading from the N-terminus, the 440-residue chain is Xylose isomerase (440 aa).

Catalysis depends on residues His101 and Asp104. The Mg(2+) site is built by Glu232, Glu268, His271, Asp296, Asp307, Asp309, and Asp339.

This sequence belongs to the xylose isomerase family. In terms of assembly, homotetramer. The cofactor is Mg(2+).

It is found in the cytoplasm. It catalyses the reaction alpha-D-xylose = alpha-D-xylulofuranose. The protein is Xylose isomerase of Cronobacter sakazakii (strain ATCC BAA-894) (Enterobacter sakazakii).